Reading from the N-terminus, the 418-residue chain is Tyrosine--tRNA ligase 1 (418 aa).

Y34 lines the L-tyrosine pocket. The short motif at P39–H48 is the 'HIGH' region element. L-tyrosine contacts are provided by Y169 and Q173. Positions K230–T234 match the 'KMSKS' region motif. K233 provides a ligand contact to ATP. Positions T352–Y418 constitute an S4 RNA-binding domain.

This sequence belongs to the class-I aminoacyl-tRNA synthetase family. TyrS type 1 subfamily. As to quaternary structure, homodimer.

It localises to the cytoplasm. The enzyme catalyses tRNA(Tyr) + L-tyrosine + ATP = L-tyrosyl-tRNA(Tyr) + AMP + diphosphate + H(+). Functionally, catalyzes the attachment of tyrosine to tRNA(Tyr) in a two-step reaction: tyrosine is first activated by ATP to form Tyr-AMP and then transferred to the acceptor end of tRNA(Tyr). The polypeptide is Tyrosine--tRNA ligase 1 (Bacillus cereus (strain ATCC 14579 / DSM 31 / CCUG 7414 / JCM 2152 / NBRC 15305 / NCIMB 9373 / NCTC 2599 / NRRL B-3711)).